A 471-amino-acid polypeptide reads, in one-letter code: Bifunctional protein GlmU (471 aa).

Positions 1-232 are pyrophosphorylase; it reads MSDITAVLLA…EEDALAPNDR (232 aa). Residues 9–12, Lys-23, Gln-73, 78–79, 102–104, Gly-141, Glu-157, and Asn-230 each bind UDP-N-acetyl-alpha-D-glucosamine; these read LAAG, GT, and YGD. Asp-104 is a Mg(2+) binding site. Residue Asn-230 coordinates Mg(2+). The linker stretch occupies residues 233-253; that stretch reads VELARAEARLRRQINERHMRN. An N-acetyltransferase region spans residues 254–471; that stretch reads GVTIINPDAT…RQRKMNREGT (218 aa). Residues Arg-335 and Lys-353 each contribute to the UDP-N-acetyl-alpha-D-glucosamine site. His-365 serves as the catalytic Proton acceptor. UDP-N-acetyl-alpha-D-glucosamine contacts are provided by Tyr-368 and Asn-379. Acetyl-CoA is bound by residues Ala-382, 388 to 389, Ala-425, and Arg-444; that span reads NY.

This sequence in the N-terminal section; belongs to the N-acetylglucosamine-1-phosphate uridyltransferase family. In the C-terminal section; belongs to the transferase hexapeptide repeat family. As to quaternary structure, homotrimer. It depends on Mg(2+) as a cofactor.

It is found in the cytoplasm. It carries out the reaction alpha-D-glucosamine 1-phosphate + acetyl-CoA = N-acetyl-alpha-D-glucosamine 1-phosphate + CoA + H(+). The enzyme catalyses N-acetyl-alpha-D-glucosamine 1-phosphate + UTP + H(+) = UDP-N-acetyl-alpha-D-glucosamine + diphosphate. It participates in nucleotide-sugar biosynthesis; UDP-N-acetyl-alpha-D-glucosamine biosynthesis; N-acetyl-alpha-D-glucosamine 1-phosphate from alpha-D-glucosamine 6-phosphate (route II): step 2/2. The protein operates within nucleotide-sugar biosynthesis; UDP-N-acetyl-alpha-D-glucosamine biosynthesis; UDP-N-acetyl-alpha-D-glucosamine from N-acetyl-alpha-D-glucosamine 1-phosphate: step 1/1. Its pathway is bacterial outer membrane biogenesis; LPS lipid A biosynthesis. Its function is as follows. Catalyzes the last two sequential reactions in the de novo biosynthetic pathway for UDP-N-acetylglucosamine (UDP-GlcNAc). The C-terminal domain catalyzes the transfer of acetyl group from acetyl coenzyme A to glucosamine-1-phosphate (GlcN-1-P) to produce N-acetylglucosamine-1-phosphate (GlcNAc-1-P), which is converted into UDP-GlcNAc by the transfer of uridine 5-monophosphate (from uridine 5-triphosphate), a reaction catalyzed by the N-terminal domain. This is Bifunctional protein GlmU from Symbiobacterium thermophilum (strain DSM 24528 / JCM 14929 / IAM 14863 / T).